A 41-amino-acid chain; its full sequence is Large ribosomal subunit protein bL36 (41 aa).

The protein belongs to the bacterial ribosomal protein bL36 family.

In Rhizobium rhizogenes (strain K84 / ATCC BAA-868) (Agrobacterium radiobacter), this protein is Large ribosomal subunit protein bL36.